A 971-amino-acid chain; its full sequence is Isoleucine--tRNA ligase (971 aa).

The short motif at 60–70 (PYANGDLHIGH) is the 'HIGH' region element. Position 563 (glutamate 563) interacts with L-isoleucyl-5'-AMP. The short motif at 604–608 (KMSKS) is the 'KMSKS' region element. Residue lysine 607 coordinates ATP. Positions 922, 925, 942, and 945 each coordinate Zn(2+).

The protein belongs to the class-I aminoacyl-tRNA synthetase family. IleS type 1 subfamily. In terms of assembly, monomer. It depends on Zn(2+) as a cofactor.

The protein resides in the cytoplasm. It catalyses the reaction tRNA(Ile) + L-isoleucine + ATP = L-isoleucyl-tRNA(Ile) + AMP + diphosphate. Functionally, catalyzes the attachment of isoleucine to tRNA(Ile). As IleRS can inadvertently accommodate and process structurally similar amino acids such as valine, to avoid such errors it has two additional distinct tRNA(Ile)-dependent editing activities. One activity is designated as 'pretransfer' editing and involves the hydrolysis of activated Val-AMP. The other activity is designated 'posttransfer' editing and involves deacylation of mischarged Val-tRNA(Ile). The polypeptide is Isoleucine--tRNA ligase (Acaryochloris marina (strain MBIC 11017)).